The sequence spans 149 residues: Large ribosomal subunit protein bL9 (149 aa).

Belongs to the bacterial ribosomal protein bL9 family.

Functionally, binds to the 23S rRNA. This chain is Large ribosomal subunit protein bL9, found in Buchnera aphidicola subsp. Cinara cedri (strain Cc).